Here is a 337-residue protein sequence, read N- to C-terminus: MADSNELGSASRRLSVVTNHLIPIGFSPARADSVELCSASSMDDRFHKVHGEVPTHEVVWKKTDFFGEGDNKEFVDIIYEKALDEGIAKITINRPERRNAFRPQTVKELMRAFNDARDDSSVGVIILTGKGTKAFCSGGDQALRTQDGYADPNDVGRLNVLDLQVQIRRLPKPVIAMVAGYAVGGGHILHMVCDLTIAADNAIFGQTGPKVGSFDAGYGSSIMSRLVGPKKAREMWFMTRFYTASEAEKMGLINTVVPLEDLEKETVKWCREILRNSPTAIRVLKAALNAVDDGHAGLQGLGGDATLLFYGTEEATEGRTAYMHRRPPDFSKFHRRP.

Residues Arg97 to Arg98, Lys133, Ser137 to Gln141, Tyr181 to Gly185, Thr207, and Ser213 each bind substrate. Hydrogencarbonate is bound at residue Gln206–Gly208.

The protein belongs to the enoyl-CoA hydratase/isomerase family. MenB subfamily. In terms of assembly, homohexamer. Hydrogencarbonate is required as a cofactor.

It localises to the peroxisome. It catalyses the reaction 2-succinylbenzoyl-CoA + H(+) = 1,4-dihydroxy-2-naphthoyl-CoA + H2O. Involved in the biosynthesis of phylloquinone (vitamin K1). Converts o-succinylbenzoyl-CoA (OSB-CoA) to 1,4-dihydroxy-2-naphthoyl-CoA (DHNA-CoA). This is 1,4-dihydroxy-2-naphthoyl-CoA synthase, peroxisomal (MENB) from Arabidopsis thaliana (Mouse-ear cress).